A 308-amino-acid polypeptide reads, in one-letter code: Ribosomal RNA large subunit methyltransferase F (308 aa).

The protein belongs to the methyltransferase superfamily. METTL16/RlmF family.

It is found in the cytoplasm. The catalysed reaction is adenosine(1618) in 23S rRNA + S-adenosyl-L-methionine = N(6)-methyladenosine(1618) in 23S rRNA + S-adenosyl-L-homocysteine + H(+). Functionally, specifically methylates the adenine in position 1618 of 23S rRNA. This Salmonella arizonae (strain ATCC BAA-731 / CDC346-86 / RSK2980) protein is Ribosomal RNA large subunit methyltransferase F.